Here is a 603-residue protein sequence, read N- to C-terminus: Serine/threonine-protein kinase PLK1 (603 aa).

Positions 1–35 are disordered; sequence MSAAVTAGKLARAPADPGKAGVPGVAAPGAPAAAP. Ser2 is subject to N-acetylserine. Thr6 carries the phosphothreonine modification. Low complexity predominate over residues 13–35; it reads APADPGKAGVPGVAAPGAPAAAP. Lys19 is covalently cross-linked (Glycyl lysine isopeptide (Lys-Gly) (interchain with G-Cter in ubiquitin)). One can recognise a Protein kinase domain in the interval 53–305; that stretch reads YVRGRFLGKG…INELLNDEFF (253 aa). ATP-binding positions include 59–67 and Lys82; that span reads LGKGGFAKC. Ser103 bears the Phosphoserine mark. An ATP-binding site is contributed by Glu131. Ser137 bears the Phosphoserine mark. The active-site Proton acceptor is Asp176. ATP contacts are provided by residues 178 to 181 and Asp194; that span reads KLGN. Residues 194 to 221 are activation loop; it reads DFGLATKVEYDGERKKTLCGTPNYIAPE. Phosphothreonine; by AURKA is present on Thr210. Thr214 is subject to Phosphothreonine. Ser269 carries the phosphoserine; by autocatalysis modification. The residue at position 335 (Ser335) is a Phosphoserine. The D-box that targets the protein for proteasomal degradation in anaphase signature appears at 337-340; the sequence is RKPL. Lys338 participates in a covalent cross-link: Glycyl lysine isopeptide (Lys-Gly) (interchain with G-Cter in SUMO2). Positions 338 to 364 are disordered; the sequence is KPLTVLNKGLENPLPERPREKEEPVVR. Residues 351–364 are compositionally biased toward basic and acidic residues; the sequence is LPERPREKEEPVVR. Residues Ser375 and Ser450 each carry the phosphoserine modification. In terms of domain architecture, POLO box 1 spans 410–488; the sequence is WVSKWVDYSD…LKYFRNYMSE (79 aa). A Glycyl lysine isopeptide (Lys-Gly) (interchain with G-Cter in ubiquitin) cross-link involves residue Lys492. Residues 493–507 form a linker region; the sequence is AGANITPREGDELAR. Thr498 carries the post-translational modification Phosphothreonine. One can recognise a POLO box 2 domain in the interval 510–592; the sequence is YLRTWFRTRS…ARTMVDKLLS (83 aa). The segment at 538-540 is important for interaction with phosphorylated proteins; the sequence is HTK.

The protein belongs to the protein kinase superfamily. Ser/Thr protein kinase family. CDC5/Polo subfamily. Interacts with CEP170. Interacts with EVI5. Interacts with FAM29A. Interacts with SLX4/BTBD12. Interacts with TTDN1. Interacts (via POLO-box domain) with the phosphorylated form of BUB1, CDC25C and CENPU. Interacts with KIF2A. Interacts with CYLD. Part of an astrin (SPAG5)-kinastrin (SKAP) complex containing KNSTRN, SPAG5, PLK1, DYNLL1 and SGO2. Interacts with BIRC6/bruce. Interacts with CDK1-phosphorylated FRY; this interaction occurs in mitotic cells, but not in interphase cells. FRY interaction facilitates AURKA-mediated PLK1 phosphorylation. Interacts with CDK1-phosphorylated DCTN6 during mitotic prometaphase; the interaction facilitates recruitment to kinetochores. Interacts with CEP68; the interaction phosphorylates CEP68. Interacts (via POLO-box domain) with DCTN1. Interacts with CEP20 in later G1, S, G2 and M phases of the cell cycle; this interaction recruits PLK1 to centrosomes, a step required for S phase progression. Interacts with KLHL22. Interacts (via POLO box domains) with NEDD9/HEF1 (via C-terminus). Interacts with FIRRM (via N-terminus region); required for maintaining, but not activating, PLK1 kinase activity. Interacts with FZR1. Interacts with SKA3; the interaction promotes the stability of PLK1; the interaction promotes the stability of PLK1. Interacts with the MTMR3:MTMR4 heterooligomer; brings CEP55 and PLK1 together during early mitosis, regulating the phosphorylation of CEP55 by PLK1 and its recruitment to the midbody where it can mediate cell abscission. Catalytic activity is enhanced by phosphorylation of Thr-210. Phosphorylation at Thr-210 is first detected on centrosomes in the G2 phase of the cell cycle, peaks in prometaphase and gradually disappears from centrosomes during anaphase. Dephosphorylation at Thr-210 at centrosomes is probably mediated by protein phosphatase 1C (PP1C), via interaction with PPP1R12A/MYPT1. Autophosphorylation and phosphorylation of Ser-137 may not be significant for the activation of PLK1 during mitosis, but may enhance catalytic activity during recovery after DNA damage checkpoint. Phosphorylated in vitro by STK10. In terms of processing, ubiquitinated by the anaphase promoting complex/cyclosome (APC/C) in anaphase and following DNA damage, leading to its degradation by the proteasome. Ubiquitination is mediated via its interaction with FZR1/CDH1. Ubiquitination and subsequent degradation prevents entry into mitosis and is essential to maintain an efficient G2 DNA damage checkpoint. Monoubiquitination at Lys-492 by the BCR(KLHL22) ubiquitin ligase complex does not lead to degradation: it promotes PLK1 dissociation from phosphoreceptor proteins and subsequent removal from kinetochores, allowing silencing of the spindle assembly checkpoint (SAC) and chromosome segregation. Placenta and colon.

The protein resides in the nucleus. Its subcellular location is the chromosome. It is found in the centromere. The protein localises to the kinetochore. It localises to the cytoplasm. The protein resides in the cytoskeleton. Its subcellular location is the microtubule organizing center. It is found in the centrosome. The protein localises to the spindle. It localises to the midbody. It carries out the reaction L-seryl-[protein] + ATP = O-phospho-L-seryl-[protein] + ADP + H(+). The enzyme catalyses L-threonyl-[protein] + ATP = O-phospho-L-threonyl-[protein] + ADP + H(+). Activated by phosphorylation of Thr-210 by AURKA; phosphorylation by AURKA is enhanced by BORA. Once activated, activity is stimulated by binding target proteins. Binding of target proteins has no effect on the non-activated kinase. Several inhibitors targeting PLKs are currently in development and are under investigation in a growing number of clinical trials, such as BI 2536, an ATP-competitive PLK1 inhibitor or BI 6727, a dihydropteridinone that specifically inhibits the catalytic activity of PLK1. Functionally, serine/threonine-protein kinase that performs several important functions throughout M phase of the cell cycle, including the regulation of centrosome maturation and spindle assembly, the removal of cohesins from chromosome arms, the inactivation of anaphase-promoting complex/cyclosome (APC/C) inhibitors, and the regulation of mitotic exit and cytokinesis. Polo-like kinase proteins act by binding and phosphorylating proteins that are already phosphorylated on a specific motif recognized by the POLO box domains. Phosphorylates BORA, BUB1B/BUBR1, CCNB1, CDC25C, CEP55, ECT2, ERCC6L, FBXO5/EMI1, FOXM1, KIF20A/MKLP2, CENPU, NEDD1, NINL, NPM1, NUDC, PKMYT1/MYT1, KIZ, MRE11, PPP1R12A/MYPT1, POLQ, PRC1, RACGAP1/CYK4, RAD51, RHNO1, SGO1, STAG2/SA2, TEX14, TOPORS, p73/TP73, TPT1, WEE1 and HNRNPU. Plays a key role in centrosome functions and the assembly of bipolar spindles by phosphorylating KIZ, NEDD1 and NINL. NEDD1 phosphorylation promotes subsequent targeting of the gamma-tubulin ring complex (gTuRC) to the centrosome, an important step for spindle formation. Phosphorylation of NINL component of the centrosome leads to NINL dissociation from other centrosomal proteins. Involved in mitosis exit and cytokinesis by phosphorylating CEP55, ECT2, KIF20A/MKLP2, CENPU, PRC1 and RACGAP1. Recruited at the central spindle by phosphorylating and docking PRC1 and KIF20A/MKLP2; creates its own docking sites on PRC1 and KIF20A/MKLP2 by mediating phosphorylation of sites subsequently recognized by the POLO box domains. Phosphorylates RACGAP1, thereby creating a docking site for the Rho GTP exchange factor ECT2 that is essential for the cleavage furrow formation. Promotes the central spindle recruitment of ECT2. Plays a central role in G2/M transition of mitotic cell cycle by phosphorylating CCNB1, CDC25C, FOXM1, CENPU, PKMYT1/MYT1, PPP1R12A/MYPT1 and WEE1. Part of a regulatory circuit that promotes the activation of CDK1 by phosphorylating the positive regulator CDC25C and inhibiting the negative regulators WEE1 and PKMYT1/MYT1. Also acts by mediating phosphorylation of cyclin-B1 (CCNB1) on centrosomes in prophase. Phosphorylates FOXM1, a key mitotic transcription regulator, leading to enhance FOXM1 transcriptional activity. Involved in kinetochore functions and sister chromatid cohesion by phosphorylating BUB1B/BUBR1, FBXO5/EMI1 and STAG2/SA2. PLK1 is high on non-attached kinetochores suggesting a role of PLK1 in kinetochore attachment or in spindle assembly checkpoint (SAC) regulation. Required for kinetochore localization of BUB1B. Regulates the dissociation of cohesin from chromosomes by phosphorylating cohesin subunits such as STAG2/SA2. Phosphorylates SGO1: required for spindle pole localization of isoform 3 of SGO1 and plays a role in regulating its centriole cohesion function. Mediates phosphorylation of FBXO5/EMI1, a negative regulator of the APC/C complex during prophase, leading to FBXO5/EMI1 ubiquitination and degradation by the proteasome. Acts as a negative regulator of p53 family members: phosphorylates TOPORS, leading to inhibit the sumoylation of p53/TP53 and simultaneously enhance the ubiquitination and subsequent degradation of p53/TP53. Phosphorylates the transactivation domain of the transcription factor p73/TP73, leading to inhibit p73/TP73-mediated transcriptional activation and pro-apoptotic functions. Phosphorylates BORA, and thereby promotes the degradation of BORA. Contributes to the regulation of AURKA function. Also required for recovery after DNA damage checkpoint and entry into mitosis. Phosphorylates MISP, leading to stabilization of cortical and astral microtubule attachments required for proper spindle positioning. Together with MEIKIN, acts as a regulator of kinetochore function during meiosis I: required both for mono-orientation of kinetochores on sister chromosomes and protection of centromeric cohesin from separase-mediated cleavage. Phosphorylates CEP68 and is required for its degradation. Regulates nuclear envelope breakdown during prophase by phosphorylating DCTN1 resulting in its localization in the nuclear envelope. Phosphorylates the heat shock transcription factor HSF1, promoting HSF1 nuclear translocation upon heat shock. Phosphorylates HSF1 also in the early mitotic period; this phosphorylation regulates HSF1 localization to the spindle pole, the recruitment of the SCF(BTRC) ubiquitin ligase complex induicing HSF1 degradation, and hence mitotic progression. Regulates mitotic progression by phosphorylating RIOK2. Through the phosphorylation of DZIP1 regulates the localization during mitosis of the BBSome, a ciliary protein complex involved in cilium biogenesis. Regulates DNA repair during mitosis by mediating phosphorylation of POLQ and RHNO1, thereby promoting POLQ recruitment to DNA damage sites. Phosphorylates ATXN10 which may play a role in the regulation of cytokinesis and may stimulate the proteasome-mediated degradation of ATXN10. This is Serine/threonine-protein kinase PLK1 (PLK1) from Homo sapiens (Human).